Here is a 338-residue protein sequence, read N- to C-terminus: Ketol-acid reductoisomerase (NADP(+)) (338 aa).

The KARI N-terminal Rossmann domain occupies 1-181 (MNVFYDKDAD…GGGRAGIIET (181 aa)). Residues 24–27 (YGSQ), Arg47, and Ser52 each bind NADP(+). The active site involves His107. Gly133 provides a ligand contact to NADP(+). The KARI C-terminal knotted domain occupies 182 to 327 (NFREETETDL…AKLRAMMPWI (146 aa)). Mg(2+) is bound by residues Asp190, Glu194, Glu226, and Glu230. Ser251 lines the substrate pocket.

This sequence belongs to the ketol-acid reductoisomerase family. Mg(2+) is required as a cofactor.

The enzyme catalyses (2R)-2,3-dihydroxy-3-methylbutanoate + NADP(+) = (2S)-2-acetolactate + NADPH + H(+). It carries out the reaction (2R,3R)-2,3-dihydroxy-3-methylpentanoate + NADP(+) = (S)-2-ethyl-2-hydroxy-3-oxobutanoate + NADPH + H(+). It functions in the pathway amino-acid biosynthesis; L-isoleucine biosynthesis; L-isoleucine from 2-oxobutanoate: step 2/4. The protein operates within amino-acid biosynthesis; L-valine biosynthesis; L-valine from pyruvate: step 2/4. Involved in the biosynthesis of branched-chain amino acids (BCAA). Catalyzes an alkyl-migration followed by a ketol-acid reduction of (S)-2-acetolactate (S2AL) to yield (R)-2,3-dihydroxy-isovalerate. In the isomerase reaction, S2AL is rearranged via a Mg-dependent methyl migration to produce 3-hydroxy-3-methyl-2-ketobutyrate (HMKB). In the reductase reaction, this 2-ketoacid undergoes a metal-dependent reduction by NADPH to yield (R)-2,3-dihydroxy-isovalerate. The sequence is that of Ketol-acid reductoisomerase (NADP(+)) from Burkholderia ambifaria (strain MC40-6).